The sequence spans 547 residues: Chaperonin GroEL (547 aa).

Residues 30-33 (TLGP), 87-91 (DGTTT), glycine 414, 478-480 (DAL), and aspartate 494 contribute to the ATP site.

It belongs to the chaperonin (HSP60) family. As to quaternary structure, forms a cylinder of 14 subunits composed of two heptameric rings stacked back-to-back. Interacts with the co-chaperonin GroES.

It localises to the cytoplasm. The enzyme catalyses ATP + H2O + a folded polypeptide = ADP + phosphate + an unfolded polypeptide.. Its function is as follows. Together with its co-chaperonin GroES, plays an essential role in assisting protein folding. The GroEL-GroES system forms a nano-cage that allows encapsulation of the non-native substrate proteins and provides a physical environment optimized to promote and accelerate protein folding. This is Chaperonin GroEL from Desulforudis audaxviator (strain MP104C).